The sequence spans 463 residues: O-phospho-L-seryl-tRNA:Cys-tRNA synthase 2 (463 aa).

Residues 154–155 (AR), N259, and 282–284 (SGH) contribute to the pyridoxal 5'-phosphate site. At K285 the chain carries N6-(pyridoxal phosphate)lysine.

Belongs to the SepCysS family. As to quaternary structure, homodimer. Interacts with SepRS. Pyridoxal 5'-phosphate is required as a cofactor.

It catalyses the reaction O-phospho-L-seryl-tRNA(Cys) + hydrogen sulfide + H(+) = L-cysteinyl-tRNA(Cys) + phosphate. Functionally, converts O-phospho-L-seryl-tRNA(Cys) (Sep-tRNA(Cys)) to L-cysteinyl-tRNA(Cys) (Cys-tRNA(Cys)). The protein is O-phospho-L-seryl-tRNA:Cys-tRNA synthase 2 of Methanocella arvoryzae (strain DSM 22066 / NBRC 105507 / MRE50).